The chain runs to 219 residues: Ribose-5-phosphate isomerase A (219 aa).

Residues 28 to 31, 81 to 84, and 94 to 97 contribute to the substrate site; these read SGST, DGAD, and KGGG. E103 acts as the Proton acceptor in catalysis. Residue K121 participates in substrate binding.

Belongs to the ribose 5-phosphate isomerase family. Homodimer.

The catalysed reaction is aldehydo-D-ribose 5-phosphate = D-ribulose 5-phosphate. It functions in the pathway carbohydrate degradation; pentose phosphate pathway; D-ribose 5-phosphate from D-ribulose 5-phosphate (non-oxidative stage): step 1/1. In terms of biological role, catalyzes the reversible conversion of ribose-5-phosphate to ribulose 5-phosphate. This Histophilus somni (strain 129Pt) (Haemophilus somnus) protein is Ribose-5-phosphate isomerase A.